The following is a 506-amino-acid chain: Ribose import ATP-binding protein RbsA (506 aa).

ABC transporter domains lie at 5-241 (LALT…VGRR) and 254-498 (RDAA…TSDV). 37–44 (GENGAGKS) is a binding site for ATP.

The protein belongs to the ABC transporter superfamily. Ribose importer (TC 3.A.1.2.1) family. As to quaternary structure, the complex is composed of an ATP-binding protein (RbsA), two transmembrane proteins (RbsC) and a solute-binding protein (RbsB).

The protein resides in the cell inner membrane. The enzyme catalyses D-ribose(out) + ATP + H2O = D-ribose(in) + ADP + phosphate + H(+). Its function is as follows. Part of the ABC transporter complex RbsABC involved in ribose import. Responsible for energy coupling to the transport system. The polypeptide is Ribose import ATP-binding protein RbsA (Burkholderia mallei (strain ATCC 23344)).